Reading from the N-terminus, the 593-residue chain is Zinc metalloproteinase-disintegrin-like kaouthiagin-like (593 aa).

The signal sequence occupies residues 1–20 (MIQALLVIICLAVFPHQGSS). Positions 21 to 196 (IILESGNVND…KTSQFTNTPE (176 aa)) are excised as a propeptide. In terms of domain architecture, Peptidase M12B spans 205 to 400 (KYIEFYVIVD…DRPQCILNKP (196 aa)). Ca(2+) contacts are provided by glutamate 208 and aspartate 292. 3 disulfide bridges follow: cysteine 316–cysteine 395, cysteine 356–cysteine 379, and cysteine 358–cysteine 363. A glycan (N-linked (GlcNAc...) asparagine) is linked at asparagine 319. Zn(2+)-binding residues include histidine 341, histidine 345, and histidine 351. Ca(2+) is bound by residues cysteine 395, asparagine 398, isoleucine 410, asparagine 413, phenylalanine 415, glutamate 417, glutamate 420, and aspartate 423. A Disintegrin domain is found at 408-477 (PPICGNYFVE…ECPTDSLQRN (70 aa)). Cystine bridges form between cysteine 411-cysteine 440, cysteine 422-cysteine 435, cysteine 424-cysteine 430, cysteine 434-cysteine 462, cysteine 449-cysteine 469, cysteine 456-cysteine 488, cysteine 481-cysteine 493, cysteine 500-cysteine 550, cysteine 515-cysteine 558, cysteine 528-cysteine 538, cysteine 545-cysteine 581, and cysteine 575-cysteine 586. Positions 455–457 (DCD) match the D/ECD-tripeptide motif. Residues aspartate 457, leucine 458, glutamate 460, aspartate 472, and serine 473 each coordinate Ca(2+). An N-linked (GlcNAc...) asparagine glycan is attached at asparagine 490.

This sequence belongs to the venom metalloproteinase (M12B) family. P-III subfamily. P-IIIa sub-subfamily. Monomer. Requires Zn(2+) as cofactor. Expressed by the venom gland.

The protein localises to the secreted. In terms of biological role, snake venom zinc metalloproteinase that cleaves the membrane-bound precursor of TNF-alpha (TNF) into its mature soluble form showing the same digestion pattern than ADAM17. This is Zinc metalloproteinase-disintegrin-like kaouthiagin-like from Naja atra (Chinese cobra).